The primary structure comprises 198 residues: Imidazoleglycerol-phosphate dehydratase (198 aa).

This sequence belongs to the imidazoleglycerol-phosphate dehydratase family.

The protein localises to the cytoplasm. The enzyme catalyses D-erythro-1-(imidazol-4-yl)glycerol 3-phosphate = 3-(imidazol-4-yl)-2-oxopropyl phosphate + H2O. Its pathway is amino-acid biosynthesis; L-histidine biosynthesis; L-histidine from 5-phospho-alpha-D-ribose 1-diphosphate: step 6/9. This chain is Imidazoleglycerol-phosphate dehydratase, found in Herminiimonas arsenicoxydans.